Here is a 1818-residue protein sequence, read N- to C-terminus: Cytadherence high molecular weight protein 2 (1818 aa).

4 coiled-coil regions span residues 31–880 (LESA…KQRE), 919–1607 (ELKI…DNKH), 1644–1755 (HLFE…QAVQ), and 1786–1817 (LATQ…QKAA).

Phosphorylated mainly on serine residues.

In terms of biological role, component of the cytoskeleton-like structure which stabilizes the shape of the wall-less Mycoplasma. This cytoskeleton-like network of accessory proteins containing HMW proteins 1 to 5 allows the proper anchoring of cytadhesin proteins in the mycoplasmal membrane at the attachment organelle. This chain is Cytadherence high molecular weight protein 2 (hmw2), found in Mycoplasma pneumoniae (strain ATCC 29342 / M129 / Subtype 1) (Mycoplasmoides pneumoniae).